A 309-amino-acid chain; its full sequence is Foldase protein PrsA (309 aa).

Residues 1–22 (MKTRSKLAAGFLTLMSVATLAA) form the signal peptide. The N-palmitoyl cysteine moiety is linked to residue cysteine 23. Residue cysteine 23 is the site of S-diacylglycerol cysteine attachment. One can recognise a PpiC domain in the interval 146–241 (TPETSVQVIK…TSYYIIKVTD (96 aa)).

Belongs to the PrsA family.

The protein resides in the cell membrane. It carries out the reaction [protein]-peptidylproline (omega=180) = [protein]-peptidylproline (omega=0). Plays a major role in protein secretion by helping the post-translocational extracellular folding of several secreted proteins. The protein is Foldase protein PrsA of Streptococcus agalactiae serotype V (strain ATCC BAA-611 / 2603 V/R).